The sequence spans 1436 residues: tRNA (guanosine(18)-2'-O)-methyltransferase (1436 aa).

S-adenosyl-L-methionine-binding positions include 1365–1367 (LEQ), Gly-1389, and 1409–1418 (IQQFGVIRSM).

This sequence belongs to the class IV-like SAM-binding methyltransferase superfamily. RNA methyltransferase TrmH family.

It localises to the cytoplasm. The enzyme catalyses guanosine(18) in tRNA + S-adenosyl-L-methionine = 2'-O-methylguanosine(18) in tRNA + S-adenosyl-L-homocysteine + H(+). S-adenosyl-L-methionine-dependent 2'-O-ribose methyltransferase that catalyzes the formation of 2'-O-methylguanosine at position 18 (Gm18) in various tRNAs. The protein is tRNA (guanosine(18)-2'-O)-methyltransferase of Saccharomyces cerevisiae (strain ATCC 204508 / S288c) (Baker's yeast).